Here is a 329-residue protein sequence, read N- to C-terminus: Delta(7)-sterol 5(6)-desaturase erg32 (329 aa).

The next 2 helical transmembrane spans lie at 67 to 87 and 149 to 169; these read LFLITWIMGTLSYFLSASFAY and FYLFFSIALFLLFSDFLIYWI. A Fatty acid hydroxylase domain is found at 156–281; sequence ALFLLFSDFL…FFTLFDRLCS (126 aa). Positions 170-175 match the Histidine box-1 motif; the sequence is HRALHH. A Histidine box-2 motif is present at residues 183-187; it reads HKLHH. Residues 210-230 form a helical membrane-spanning segment; that stretch reads LPYHMFPFFFPLNKYVYLLLF. Positions 257 to 262 match the Histidine box-3 motif; that stretch reads HHAAHH.

Belongs to the sterol desaturase family. The cofactor is Fe cation.

The protein localises to the endoplasmic reticulum membrane. Its subcellular location is the golgi apparatus membrane. It catalyses the reaction episterol + 2 Fe(II)-[cytochrome b5] + O2 + 2 H(+) = 5-dehydroepisterol + 2 Fe(III)-[cytochrome b5] + 2 H2O. Its pathway is steroid metabolism; ergosterol biosynthesis. C-5 sterol desaturase; part of the third module of ergosterol biosynthesis pathway that includes by the late steps of the pathway. Erg31 and erg32 catalyze the introduction of a C-5 double bond in the B ring to produce 5-dehydroepisterol. The third module or late pathway involves the ergosterol synthesis itself through consecutive reactions that mainly occur in the endoplasmic reticulum (ER) membrane. Firstly, the squalene synthase erg9 catalyzes the condensation of 2 farnesyl pyrophosphate moieties to form squalene, which is the precursor of all steroids. Secondly, squalene is converted into lanosterol by the consecutive action of the squalene epoxidase erg1 and the lanosterol synthase erg7. The lanosterol 14-alpha-demethylase erg11/cyp1 catalyzes C14-demethylation of lanosterol to produce 4,4'-dimethyl cholesta-8,14,24-triene-3-beta-ol. In the next steps, a complex process involving various demethylation, reduction and desaturation reactions catalyzed by the C-14 reductase erg24 and the C-4 demethylation complex erg25-erg26-erg27 leads to the production of zymosterol. Erg28 likely functions in the C-4 demethylation complex reaction by tethering erg26 and Erg27 to the endoplasmic reticulum or to facilitate interaction between these proteins. Then, the sterol 24-C-methyltransferase erg6 catalyzes the methyl transfer from S-adenosyl-methionine to the C-24 of zymosterol to form fecosterol. The C-8 sterol isomerase erg2 catalyzes the reaction which results in unsaturation at C-7 in the B ring of sterols and thus converts fecosterol to episterol. The sterol-C5-desaturases erg31 and erg32 then catalyze the introduction of a C-5 double bond in the B ring to produce 5-dehydroepisterol. The C-22 sterol desaturase erg5 further converts 5-dehydroepisterol into ergosta-5,7,22,24(28)-tetraen-3beta-ol by forming the C-22(23) double bond in the sterol side chain. Finally, ergosta-5,7,22,24(28)-tetraen-3beta-ol is substrate of the C-24(28) sterol reductase erg4 to produce ergosterol. In the genus Schizosaccharomyces, a second route exists between lanosterol and fecosterol, via the methylation of lanosterol to eburicol by erg6, followed by C14-demethylation by erg11/cyp1 and C4-demethylation by the demethylation complex erg25-erg26-erg27. In Schizosaccharomyces pombe (strain 972 / ATCC 24843) (Fission yeast), this protein is Delta(7)-sterol 5(6)-desaturase erg32.